Reading from the N-terminus, the 69-residue chain is DNA-directed RNA polymerase subunit omega (69 aa).

Belongs to the RNA polymerase subunit omega family. As to quaternary structure, the RNAP catalytic core consists of 2 alpha, 1 beta, 1 beta' and 1 omega subunit. When a sigma factor is associated with the core the holoenzyme is formed, which can initiate transcription.

The enzyme catalyses RNA(n) + a ribonucleoside 5'-triphosphate = RNA(n+1) + diphosphate. Promotes RNA polymerase assembly. Latches the N- and C-terminal regions of the beta' subunit thereby facilitating its interaction with the beta and alpha subunits. The chain is DNA-directed RNA polymerase subunit omega from Hahella chejuensis (strain KCTC 2396).